We begin with the raw amino-acid sequence, 348 residues long: Putative transport protein HP_0567 (348 aa).

8 helical membrane passes run 6-26, 27-47, 56-76, 143-163, 194-214, 224-244, 266-286, and 300-320; these read FFWI…QDFL, MDAL…VFLD, SFLC…FIVY, LKLI…FYYG, IVLL…GVMI, LGIL…LIWI, SILL…IVFI, and MLIF…GIIV.

This sequence belongs to the autoinducer-2 exporter (AI-2E) (TC 2.A.86) family.

The protein resides in the cell membrane. This chain is Putative transport protein HP_0567, found in Helicobacter pylori (strain ATCC 700392 / 26695) (Campylobacter pylori).